The sequence spans 494 residues: Glutamate--tRNA ligase (494 aa).

The 'HIGH' region motif lies at 9–19 (PSPTGDPHLGT). The 'KMSKS' region motif lies at 250-254 (KLSKR). Lys-253 is a binding site for ATP.

It belongs to the class-I aminoacyl-tRNA synthetase family. Glutamate--tRNA ligase type 1 subfamily. Monomer.

Its subcellular location is the cytoplasm. The catalysed reaction is tRNA(Glu) + L-glutamate + ATP = L-glutamyl-tRNA(Glu) + AMP + diphosphate. In terms of biological role, catalyzes the attachment of glutamate to tRNA(Glu) in a two-step reaction: glutamate is first activated by ATP to form Glu-AMP and then transferred to the acceptor end of tRNA(Glu). The polypeptide is Glutamate--tRNA ligase (Pseudoalteromonas translucida (strain TAC 125)).